A 607-amino-acid polypeptide reads, in one-letter code: Dolichyl-diphosphooligosaccharide--protein glycosyltransferase subunit 1 (607 aa).

Positions 1–23 (MEAPAARLFLLLLLGTWAPAPGS) are cleaved as a signal peptide. At 24–434 (ASSEAPPLIN…VVHYTFNKVL (411 aa)) the chain is on the lumenal side. Lys-187 carries the post-translational modification N6-acetyllysine. Residue Asn-299 is glycosylated (N-linked (GlcNAc...) asparagine). The helical transmembrane segment at 435–455 (MLQEPLLVVAAFYILFFTVII) threads the bilayer. Topologically, residues 456–607 (YVRLDFSITK…TKIDHILDAL (152 aa)) are cytoplasmic. Position 538 is an N6-acetyllysine; alternate (Lys-538). Lys-538 participates in a covalent cross-link: Glycyl lysine isopeptide (Lys-Gly) (interchain with G-Cter in SUMO2); alternate.

Belongs to the OST1 family. As to quaternary structure, component of the oligosaccharyltransferase (OST) complex. OST exists in two different complex forms which contain common core subunits RPN1, RPN2, OST48, OST4, DAD1 and TMEM258, either STT3A or STT3B as catalytic subunits, and form-specific accessory subunits. STT3A complex assembly occurs through the formation of 3 subcomplexes. Subcomplex 1 contains RPN1 and TMEM258, subcomplex 2 contains the STT3A-specific subunits STT3A, DC2/OSTC, and KCP2 as well as the core subunit OST4, and subcomplex 3 contains RPN2, DAD1, and OST48. The STT3A complex can form stable complexes with the Sec61 complex or with both the Sec61 and TRAP complexes. Interacts with TMEM35A/NACHO. Post-translationally, ubiquitinated by the ECS(ASB11) complex. In terms of processing, ufmylated by UFL1 in response to endoplasmic reticulum stress, promoting reticulophagy of endoplasmic reticulum sheets.

The protein localises to the endoplasmic reticulum membrane. Its pathway is protein modification; protein glycosylation. Its function is as follows. Subunit of the oligosaccharyl transferase (OST) complex that catalyzes the initial transfer of a defined glycan (Glc(3)Man(9)GlcNAc(2) in eukaryotes) from the lipid carrier dolichol-pyrophosphate to an asparagine residue within an Asn-X-Ser/Thr consensus motif in nascent polypeptide chains, the first step in protein N-glycosylation. N-glycosylation occurs cotranslationally and the complex associates with the Sec61 complex at the channel-forming translocon complex that mediates protein translocation across the endoplasmic reticulum (ER). All subunits are required for a maximal enzyme activity. This chain is Dolichyl-diphosphooligosaccharide--protein glycosyltransferase subunit 1, found in Pongo abelii (Sumatran orangutan).